A 110-amino-acid chain; its full sequence is UPF0145 protein MTH_507 (110 aa).

The protein belongs to the UPF0145 family.

The protein is UPF0145 protein MTH_507 of Methanothermobacter thermautotrophicus (strain ATCC 29096 / DSM 1053 / JCM 10044 / NBRC 100330 / Delta H) (Methanobacterium thermoautotrophicum).